Reading from the N-terminus, the 460-residue chain is Mitochondrial distribution and morphology protein 10 (460 aa).

The protein belongs to the MDM10 family. As to quaternary structure, component of the ER-mitochondria encounter structure (ERMES) or MDM complex, composed of MMM1, MDM10, MDM12 and MDM34. Associates with the mitochondrial outer membrane sorting assembly machinery SAM(core) complex.

The protein resides in the mitochondrion outer membrane. Component of the ERMES/MDM complex, which serves as a molecular tether to connect the endoplasmic reticulum and mitochondria. Components of this complex are involved in the control of mitochondrial shape and protein biogenesis and may function in phospholipid exchange. MDM10 is involved in the late assembly steps of the general translocase of the mitochondrial outer membrane (TOM complex). Functions in the TOM40-specific route of the assembly of outer membrane beta-barrel proteins, including the association of TOM40 with the receptor TOM22 and small TOM proteins. Can associate with the SAM(core) complex as well as the MDM12-MMM1 complex, both involved in late steps of the major beta-barrel assembly pathway, that is responsible for biogenesis of all outer membrane beta-barrel proteins. May act as a switch that shuttles between both complexes and channels precursor proteins into the TOM40-specific pathway. Plays a role in mitochondrial morphology and in the inheritance of mitochondria. This chain is Mitochondrial distribution and morphology protein 10, found in Candida glabrata (strain ATCC 2001 / BCRC 20586 / JCM 3761 / NBRC 0622 / NRRL Y-65 / CBS 138) (Yeast).